The primary structure comprises 77 residues: Conotoxin Mr8.2 (77 aa).

Residues 1-16 (MLRLITAAVLVSACLA) form the signal peptide. A propeptide spanning residues 17-32 (YPQKKRTPPQTRPTSR) is cleaved from the precursor.

Belongs to the conotoxin B2 family. Contains 5 disulfide bonds. As to expression, expressed by the venom duct.

It localises to the secreted. This Conus marmoreus (Marble cone) protein is Conotoxin Mr8.2.